The chain runs to 353 residues: Methionine import ATP-binding protein MetN (353 aa).

The ABC transporter domain occupies 6–249 (LKNVDVDFPQ…PKQELTKKFV (244 aa)). 41-48 (GFSGAGKS) is a binding site for ATP.

Belongs to the ABC transporter superfamily. Methionine importer (TC 3.A.1.24) family. As to quaternary structure, the complex is composed of two ATP-binding proteins (MetN), two transmembrane proteins (MetI) and a solute-binding protein (MetQ).

It is found in the cell membrane. It carries out the reaction L-methionine(out) + ATP + H2O = L-methionine(in) + ADP + phosphate + H(+). The catalysed reaction is D-methionine(out) + ATP + H2O = D-methionine(in) + ADP + phosphate + H(+). Its function is as follows. Part of the ABC transporter complex MetNIQ involved in methionine import. Responsible for energy coupling to the transport system. The chain is Methionine import ATP-binding protein MetN from Lactobacillus acidophilus (strain ATCC 700396 / NCK56 / N2 / NCFM).